The sequence spans 1315 residues: Claspin (1315 aa).

Disordered regions lie at residues 22–276 (EAAD…AARL) and 345–474 (PADA…EQKT). Serine 26, serine 42, serine 46, serine 53, serine 65, and serine 67 each carry phosphoserine. Residues 65 to 74 (SDSEAEDRDD) are compositionally biased toward acidic residues. The span at 91–101 (NLHSGKSQSRS) shows a compositional bias: polar residues. Residues 108–118 (DSDESDMEETP) are compositionally biased toward acidic residues. Serine 109, serine 112, and serine 119 each carry phosphoserine. A compositionally biased stretch (polar residues) spans 119-128 (SQESPETQEA). Basic and acidic residues-rich tracts occupy residues 153–178 (LLRE…MEKI) and 186–197 (TRCEESDADRPL). Residues 159-187 (EGKAKSKRRLEKEERTMEKIRRLKKKETR) adopt a coiled-coil conformation. A compositionally biased stretch (acidic residues) spans 205–228 (EDSDLFETGLEEENDSALEDEESL). A Phosphoserine modification is found at serine 220. A compositionally biased stretch (basic residues) spans 235 to 245 (VKNKVKNRKKK). Serine 255 carries the post-translational modification Phosphoserine. Composition is skewed to basic and acidic residues over residues 391 to 415 (ACGK…DDRP) and 455 to 470 (EELK…EGMP). At serine 522 the chain carries Phosphoserine. Residues 599 to 626 (EKLQMLKAKLQEAMKLRRLEERQKRQAL) are a coiled coil. The tract at residues 625-691 (ALFKLDNEDG…SSDIGKSVAL (67 aa)) is disordered. A compositionally biased stretch (acidic residues) spans 632-657 (EDGFEEEEEEEEMTDESEEDGEEETT). Positions 669–679 (KDEKETDKENT) are enriched in basic and acidic residues. A phosphoserine mark is found at serine 698, serine 701, serine 709, serine 722, and serine 740. The tract at residues 713–750 (MGYFPTEEKSETDEYLAKQSDKLDEDDSSSLLTKESSH) is disordered. The segment covering 741-750 (SSLLTKESSH) has biased composition (low complexity). Phosphoserine is present on residues serine 785, serine 787, serine 810, serine 816, and serine 823. Residue lysine 868 is modified to N6-acetyllysine. 2 CKB motif repeats span residues 887–896 (ELLDLCTGQF) and 917–926 (ELLNLCSGKF). Phosphothreonine; by CHEK1 is present on threonine 893. 2 disordered regions span residues 924-1002 (GKFP…NDEE) and 1032-1052 (EDEA…DGEE). Serine 932 carries the phosphoserine modification. One copy of the CKB motif 3 repeat lies at 954–963 (EALALCSGSF). Residues 966–1063 (DREEEGEEEE…DEYEEDVIDE (98 aa)) are acidic patch. Acidic residues-rich tracts occupy residues 967–977 (REEEGEEEEFG), 990–1002 (SDED…NDEE), and 1043–1052 (GSEDEYDGEE). A phosphoserine mark is found at serine 990, serine 996, and serine 998. Positions 1001-1036 (EELALDLEDDEEELLKQSEKMKRQMRLKKYLEDEAE) form a coiled coil. Phosphoserine occurs at positions 1133 and 1265. The tract at residues 1264–1315 (LSPTKAEAAKDSSKPQVRRRGLSSMMSPSPKRLKTNGSSPGPKRSIFRYLES) is disordered.

The protein belongs to the claspin family. In terms of assembly, interacts (phosphorylation-dependent) with CHEK1; regulates CLSPN function in checkpoint for DNA damage and replication. Interacts with ATR and RAD9A and these interactions are slightly reduced during checkpoint activation. Interacts with BRCA1 and this interaction increases during checkpoint activation. Interacts with TIMELESS; the interaction is required for leading-strand replication. Associates with the MCM2-7 complex and other replisome factors. Interacts (via the acidic patch) with CDC7; the interaction is required for phosphorylation of MCM proteins and CLASPIN by CDC7. Interacts with PCNA. Interacts with FZR1. Phosphorylated. Undergoes ATR-dependent phosphorylation by CHEK1 during activation of DNA replication or damage checkpoints. Phosphorylation by CSNK1G1/CK1 promotes CHEK1 binding. Phosphorylated by CDC7 during DNA replication, phosphorylation inhibits interaction between the acidic patch and N-terminal segments leading to increased binding to DNA and PCNA. In terms of processing, ubiquitinated by the anaphase promoting complex/cyclosome (APC/C) during G1 phase, leading to its degradation by the proteasome. Ubiquitination is mediated via its interaction with FZR1/CDH1. Following DNA damage, it is deubiquitinated by USP28 in G2 phase, preventing its degradation. Post-translationally, proteolytically cleaved by caspase-7 (CASP7) in response to apoptosis, leading to its inactivation.

The protein localises to the nucleus. Required for checkpoint mediated cell cycle arrest in response to inhibition of DNA replication or to DNA damage induced by both ionizing and UV irradiation. Adapter protein which binds to BRCA1 and the checkpoint kinase CHEK1 and facilitates the ATR-dependent phosphorylation of both proteins. Also required to maintain normal rates of replication fork progression during unperturbed DNA replication. Binds directly to DNA, with particular affinity for branched or forked molecules and interacts with multiple protein components of the replisome such as the MCM2-7 complex and TIMELESS. Important for initiation of DNA replication, recruits kinase CDC7 to phosphorylate MCM2-7 components. The polypeptide is Claspin (Clspn) (Mus musculus (Mouse)).